The following is a 165-amino-acid chain: Phosphopantetheine adenylyltransferase (165 aa).

Substrate is bound at residue serine 9. Residues 9 to 10 (SF) and histidine 17 contribute to the ATP site. Lysine 41, isoleucine 75, and arginine 89 together coordinate substrate. ATP is bound by residues 90-92 (GVR), glutamate 100, and 125-131 (YLFVRSD).

Belongs to the bacterial CoaD family. Homohexamer. Requires Mg(2+) as cofactor.

The protein resides in the cytoplasm. The catalysed reaction is (R)-4'-phosphopantetheine + ATP + H(+) = 3'-dephospho-CoA + diphosphate. Its pathway is cofactor biosynthesis; coenzyme A biosynthesis; CoA from (R)-pantothenate: step 4/5. Reversibly transfers an adenylyl group from ATP to 4'-phosphopantetheine, yielding dephospho-CoA (dPCoA) and pyrophosphate. In Borrelia duttonii (strain Ly), this protein is Phosphopantetheine adenylyltransferase.